A 94-amino-acid polypeptide reads, in one-letter code: DNA-directed RNA polymerase subunit Rpo11 (94 aa).

This sequence belongs to the archaeal Rpo11/eukaryotic RPB11/RPC19 RNA polymerase subunit family. Part of the RNA polymerase complex.

Its subcellular location is the cytoplasm. It carries out the reaction RNA(n) + a ribonucleoside 5'-triphosphate = RNA(n+1) + diphosphate. Its function is as follows. DNA-dependent RNA polymerase (RNAP) catalyzes the transcription of DNA into RNA using the four ribonucleoside triphosphates as substrates. The chain is DNA-directed RNA polymerase subunit Rpo11 from Natronomonas pharaonis (strain ATCC 35678 / DSM 2160 / CIP 103997 / JCM 8858 / NBRC 14720 / NCIMB 2260 / Gabara) (Halobacterium pharaonis).